Consider the following 107-residue polypeptide: U1-lycotoxin-Ls1m (107 aa).

Positions 1 to 20 are cleaved as a signal peptide; the sequence is MMKVLVVVALLVTLISYSSS. A propeptide spanning residues 21-41 is cleaved from the precursor; sequence EGIDDLEADELLSLMANEQTR. 4 disulfide bridges follow: cysteine 44-cysteine 59, cysteine 51-cysteine 68, cysteine 58-cysteine 86, and cysteine 70-cysteine 84.

It belongs to the neurotoxin 19 (CSTX) family. 04 (U1-Lctx) subfamily. In terms of tissue distribution, expressed by the venom gland.

It localises to the secreted. This Lycosa singoriensis (Wolf spider) protein is U1-lycotoxin-Ls1m.